The primary structure comprises 312 residues: MNTSTFNLDHCIEKLQKCEILPESTIKEITDKMKELLISESNVQEIRSPVTVVGDVHGQFYDVLEIFKIGGQCPDTNYLFLGDYVDRGYHSVETISLLTCLKLRYPSRITLLRGNHESRQITQVYGFYGECMRKYGNPTVWKYFTEMFDYLSVAAIIDEAIYCVHGGLSPSALSIDQIKVLDRFQEVPNEGALSDILWSDPDPDREGFVESQRGAGYSYGKDVTLRFLQNNKMQHIIRAHQLCMDGYQTLFDNKLSTVWSAPNYCNRCGNMASIVEVNEKLERYFNTYAAAPQSLSNKPTLDTNKELPDYFL.

Residues D55, H57, D83, and N115 each contribute to the Mn(2+) site. Catalysis depends on H116, which acts as the Proton donor. 2 residues coordinate Mn(2+): H165 and H240.

Belongs to the PPP phosphatase family. PP-2A subfamily. As to quaternary structure, component of the Sca1 complex composed of at least gefA, gefH, scaA, phr, and the protein phosphatase 2A subunits pppA and pho2B. It depends on Mn(2+) as a cofactor.

The protein localises to the cell membrane. It catalyses the reaction O-phospho-L-seryl-[protein] + H2O = L-seryl-[protein] + phosphate. The enzyme catalyses O-phospho-L-threonyl-[protein] + H2O = L-threonyl-[protein] + phosphate. Component of the Sca1 complex, a regulator of cell motility, chemotaxis and signal relay. The Sca1 complex is recruited to the plasma membrane in a chemoattractant- and F-actin-dependent manner and is enriched at the leading edge of chemotaxing cells where it regulates F-actin dynamics and signal relay by controlling the activation of rasC and the downstream target of rapamycin complex 2 (TORC2)-Akt/protein kinase B (PKB) pathway. This is Protein phosphatase 2A catalytic subunit B from Dictyostelium discoideum (Social amoeba).